Consider the following 448-residue polypeptide: Iroquois-class homeodomain protein irx-3 (448 aa).

Positions 108–170 (DPSRPKNATR…NARRRLKKEN (63 aa)) form a DNA-binding region, homeobox; TALE-type. Positions 171-247 (KMTWAPRSRT…EVSDGFEDLN (77 aa)) are disordered. The span at 195-222 (KHEDEEEIDLENIDTEDIESKEDLDDPD) shows a compositional bias: acidic residues. The segment covering 223-237 (TDIHSDSKTDTRSDS) has biased composition (basic and acidic residues). Residues 238-247 (EVSDGFEDLN) are compositionally biased toward acidic residues.

Belongs to the TALE/IRO homeobox family. In terms of tissue distribution, primarily expressed in the developing central nervous system (CNS). At gastrula stage, expressed in both the superficial and deep layers of the presumptive neural plate with expression spreading to the prospective hindbrain, spinal cord and midbrain-hindbrain junction as neurulation proceeds. Not expressed in the anterior neural plate and CNS expression in the tadpole excludes the forebrain. Outside of the CNS, expressed around the closing blastopore at early gastrula stages and as gastrulation proceeds, expression switches to the anterior lateral plate mesoderm. In tadpoles, expressed in the ectodermal layer of the branchial arches, and in the otic vesicle. Also expressed in specific and overlapping dynamic patterns with irx1 and irx2 during pronephric kidney development. Renal expression begins before segment-specific terminal differentiation in the pronephric anlage at mid-neurula stage, and is later found in proximal tubule PT3 as well as intermediate tubule segments IT1 and IT2, with expression in the kidney being maintained through to the tadpole stage.

Its subcellular location is the nucleus. In terms of biological role, acts partially redundantly with other irx members in neural patterning. Required for formation of the posterior forebrain, midbrain, hindbrain, and to a lesser extent, spinal cord. Both up-regulates and down-regulates gene expression during neural development. Acts early in neural plate development to induce proneural gene expression and specify a neural precursor state. Also up-regulates repressors that prevent neuronal differentiation. Required during at least two stages of pronephros kidney development; during neurula stages, maintains transcription of key renal genes to define the size and identity of the pronephric anlage, probably in part through regulation of bmp-signaling. Subsequently required for proper formation of the intermediate tubule segment of the pronephros. This is Iroquois-class homeodomain protein irx-3 (irx3) from Xenopus laevis (African clawed frog).